The primary structure comprises 321 residues: Tyrosine recombinase XerC (321 aa).

The Core-binding (CB) domain maps to 16–107; the sequence is PSIAQEMTRW…GLRSFGRFLE (92 aa). One can recognise a Tyr recombinase domain in the interval 128–315; sequence SLPKPLPMAS…DSERLLEVYA (188 aa). Catalysis depends on residues Arg-173, Lys-199, His-267, Arg-270, and His-293. Residue Tyr-302 is the O-(3'-phospho-DNA)-tyrosine intermediate of the active site.

This sequence belongs to the 'phage' integrase family. XerC subfamily. As to quaternary structure, forms a cyclic heterotetrameric complex composed of two molecules of XerC and two molecules of XerD.

The protein resides in the cytoplasm. Site-specific tyrosine recombinase, which acts by catalyzing the cutting and rejoining of the recombining DNA molecules. The XerC-XerD complex is essential to convert dimers of the bacterial chromosome into monomers to permit their segregation at cell division. It also contributes to the segregational stability of plasmids. The chain is Tyrosine recombinase XerC from Bradyrhizobium diazoefficiens (strain JCM 10833 / BCRC 13528 / IAM 13628 / NBRC 14792 / USDA 110).